Here is a 334-residue protein sequence, read N- to C-terminus: Galactosylgalactosylxylosylprotein 3-beta-glucuronosyltransferase 1 (334 aa).

At 1–6 the chain is on the cytoplasmic side; it reads MPKRRD. The interval 3 to 5 is essential for transport from endoplasmic reticulum to Golgi apparatus and interaction with SAR1A; it reads KRR. The chain crosses the membrane as a helical; Signal-anchor for type II membrane protein span at residues 7 to 27; sequence ILAIVLIVLPWTLLITVWHQS. The Lumenal portion of the chain corresponds to 28 to 334; it reads SLAPLLAVHK…KGFTDPSVEI (307 aa). 91-93 contributes to the UDP-alpha-D-glucuronate binding site; it reads PTY. A phosphothreonine mark is found at T103 and T108. D122 is a binding site for UDP-alpha-D-glucuronate. The N-linked (GlcNAc...) asparagine glycan is linked to N140. The UDP-alpha-D-glucuronate site is built by R165 and R170. Residue N184 is glycosylated (N-linked (GlcNAc...) asparagine). Position 195–197 (195–197) interacts with UDP-alpha-D-glucuronate; the sequence is DDD. D197 provides a ligand contact to Mn(2+). The segment at 245 to 254 is interaction with galactose moiety of substrate glycoprotein; the sequence is FDPHRPFAID. The active-site Proton donor/acceptor is the E284. A glycan (N-linked (GlcNAc...) asparagine) is linked at N303. Residue 311-313 participates in UDP-alpha-D-glucuronate binding; that stretch reads HTR.

It belongs to the glycosyltransferase 43 family. In terms of assembly, homodimer. Interacts with SAR1A. It depends on Mn(2+) as a cofactor. In terms of processing, the soluble form derives from the membrane form by proteolytic processing.

Its subcellular location is the golgi apparatus membrane. It is found in the secreted. It localises to the endoplasmic reticulum membrane. The enzyme catalyses 3-O-(beta-D-galactosyl-(1-&gt;3)-beta-D-galactosyl-(1-&gt;4)-beta-D-xylosyl)-L-seryl-[protein] + UDP-alpha-D-glucuronate = 3-O-(beta-D-GlcA-(1-&gt;3)-beta-D-Gal-(1-&gt;3)-beta-D-Gal-(1-&gt;4)-beta-D-Xyl)-L-seryl-[protein] + UDP + H(+). Its pathway is protein modification; protein glycosylation. In terms of biological role, involved in the biosynthesis of L2/HNK-1 carbohydrate epitope on glycoproteins. Can also play a role in glycosaminoglycan biosynthesis. Substrates include asialo-orosomucoid (ASOR), asialo-fetuin, and asialo-neural cell adhesion molecule. Requires sphingomyelin for activity: stearoyl-sphingomyelin was the most effective, followed by palmitoyl-sphingomyelin and lignoceroyl-sphingomyelin. Activity was demonstrated only for sphingomyelin with a saturated fatty acid and not for that with an unsaturated fatty acid, regardless of the length of the acyl group. This Mus musculus (Mouse) protein is Galactosylgalactosylxylosylprotein 3-beta-glucuronosyltransferase 1.